The following is a 220-amino-acid chain: Small ribosomal subunit protein eS8 (220 aa).

Disordered regions lie at residues Met1–Asn41 and Ala131–Asn151. Residues Met8 to Lys26 are compositionally biased toward basic residues.

The protein belongs to the eukaryotic ribosomal protein eS8 family.

The polypeptide is Small ribosomal subunit protein eS8 (RPS8) (Oryza sativa subsp. japonica (Rice)).